Reading from the N-terminus, the 145-residue chain is 3-hydroxyacyl-[acyl-carrier-protein] dehydratase FabZ (145 aa).

His-49 is a catalytic residue.

The protein belongs to the thioester dehydratase family. FabZ subfamily.

It localises to the cytoplasm. The enzyme catalyses a (3R)-hydroxyacyl-[ACP] = a (2E)-enoyl-[ACP] + H2O. Functionally, involved in unsaturated fatty acids biosynthesis. Catalyzes the dehydration of short chain beta-hydroxyacyl-ACPs and long chain saturated and unsaturated beta-hydroxyacyl-ACPs. This Rickettsia conorii (strain ATCC VR-613 / Malish 7) protein is 3-hydroxyacyl-[acyl-carrier-protein] dehydratase FabZ.